The primary structure comprises 956 residues: Calsyntenin-3 (956 aa).

An N-terminal signal peptide occupies residues 1 to 19; that stretch reads MTLLLVSLLLASLLQISSG. The Cytoplasmic segment spans residues 1–21; that stretch reads MTLLLVSLLLASLLQISSGNK. Residues 20–847 are Extracellular-facing; the sequence is NKANKHKPWI…SHRNSMVPSA (828 aa). Residues 22–42 constitute an intramembrane region (helical); it reads ANKHKPWIEAEYQGIVMENDN. 2 Cadherin domains span residues 29-145 and 146-246; these read IEAE…APVF and VERL…KPSW. Residues 43-73 are Cytoplasmic-facing; it reads TVLLNPPLFALDKDAPLRYAGEICGFRLHGS. The segment at residues 74–94 is an intramembrane region (helical); that stretch reads GVPFEAVILDKATGEGLIRAK. Over 95-139 the chain is Cytoplasmic; that stretch reads EPVDCEAQKEHTFTIQAYDCGEGPDGTNTKKSHKATVHVRVNDVN. The segment at residues 140-160 is an intramembrane region (helical); it reads EFAPVFVERLYRAAVTEGKLY. The Cytoplasmic segment spans residues 161-248; the sequence is DRILRVEAID…KPTCKPSWQG (88 aa). Residues 249–269 form a helical membrane-spanning segment; it reads WNKRIEYAPGAGSLALFPGIR. Residues 270–357 are Lumenal-facing; the sequence is LETCDEPLWN…GTQAVQVPLG (88 aa). Residues Asn299, Asn327, Asn347, Asn507, and Asn740 are each glycosylated (N-linked (GlcNAc...) asparagine). The chain crosses the membrane as a helical span at residues 848-868; the sequence is ATLIIVVCVGFLVLMVILGLV. Over 869–956 the chain is Cytoplasmic; it reads RIHSLHRRVS…RIIESPPHRY (88 aa). The tract at residues 916–956 is disordered; it reads QTCVAGVAGGQQEEEDSSDSEAADSPSSDERRIIESPPHRY. The span at 927 to 937 shows a compositional bias: acidic residues; sequence QEEEDSSDSEA. The span at 943-956 shows a compositional bias: basic and acidic residues; that stretch reads SDERRIIESPPHRY.

It belongs to the calsyntenin family. In terms of assembly, interacts (via cadherin domains) with both alpha and beta isoforms of neurexins (NRXN1, NRXN2 and NRXN3). Directly interacts with APBA2. Forms a tripartite complex with APBA2 and APP. Interacts with low affinity with KLC1. Interacts with SLC23A2/SVCT2. As to quaternary structure, interacts with CIDEA; inhibiting the lipid transferase activity of CIDEA. Interacts with CIDEC; inhibiting the lipid transferase activity of CIDEC. Proteolytically processed under normal cellular conditions. A primary zeta-cleavage generates a large extracellular (soluble) N-terminal domain (sAlc) and a short C-terminal transmembrane fragment (CTF1). A secondary cleavage catalyzed by gamma-secretase within the transmembrane domain releases the beta-Alc-beta chain in the extracellular milieu and produces an intracellular fragment (AlcICD). This processing is strongly suppressed in the tripartite complex formed with APBA2 and APP, which seems to prevent the association with gamma-secretase. Post-translationally, ubiquitinated: endoplasmic reticulum-localized protein is ubiquitinated and degraded by the endoplasmic reticulum-associated degradation (ERAD) pathway. In terms of tissue distribution, restricted to the brain (at protein level). In the cerebral cortex, found in the somas and neuropil of all layers. Expressed at highest levels in neurons of cortical layer 5 and, at lower levels, in neurons of the upper layers. Highly expressed in Purkinje cells. Also found in a few scattered interneurons throughout the granule cell layer and occasionally in neurons in the molecular layer (at protein level). In all layers, high levels in a subpopulation of presumptive GABAergic neurons (based on morphology). Expression is restricted to adipose tissue, with high expression in thermogenic adipocytes (brown adipose tissue).

The protein resides in the postsynaptic cell membrane. It is found in the endoplasmic reticulum membrane. The protein localises to the golgi apparatus membrane. It localises to the cell projection. Its subcellular location is the dendrite. The protein resides in the lipid droplet. Postsynaptic adhesion molecule that binds to presynaptic neurexins to mediate both excitatory and inhibitory synapse formation. Promotes synapse development by acting as a cell adhesion molecule at the postsynaptic membrane, which associates with both neurexin-alpha and neurexin-beta proteins at the presynaptic membrane. Regulates the balance between excitatory and inhibitory synapses by inhibiting formation of excitatory parallel-fiber synapses and promoting formation of inhibitory synapses in the same neuron. May also be involved in ascorbate (vitamin C) uptake via its interaction with SLC23A2/SVCT2. Complex formation with APBA2 and APP, stabilizes APP metabolism and enhances APBA2-mediated suppression of beta-APP40 secretion, due to the retardation of intracellular APP maturation. In terms of biological role, adipose-specific isoform that plays a key role in adaptive thermogenesis. Facilitates the efficient use of stored triglyceride by promoting multilocular morphology of thermogenic adipocytes: acts by inhibiting the activity of CIDEA and CIDEC on lipid droplets, thereby preventing lipid droplet fusion and facilitating lipid utilization. May also participate in adaptive thermogenesis by promoting sympathetic innervation of thermogenic adipose tissue: acts by driving secretion of neurotrophic factor S100B from brown adipocytes, stimulating neurite outgrowth from sympathetic neurons. This Mus musculus (Mouse) protein is Calsyntenin-3.